The primary structure comprises 182 residues: Large ribosomal subunit protein bL25 (182 aa).

This sequence belongs to the bacterial ribosomal protein bL25 family. CTC subfamily. Part of the 50S ribosomal subunit; part of the 5S rRNA/L5/L18/L25 subcomplex. Contacts the 5S rRNA. Binds to the 5S rRNA independently of L5 and L18.

Functionally, this is one of the proteins that binds to the 5S RNA in the ribosome where it forms part of the central protuberance. This is Large ribosomal subunit protein bL25 from Borrelia duttonii (strain Ly).